The chain runs to 235 residues: C-&gt;U-editing enzyme APOBEC-1 (235 aa).

In terms of domain architecture, CMP/dCMP-type deaminase spans glycine 10 to lysine 131. Histidine 60 contributes to the Zn(2+) binding site. Catalysis depends on glutamate 62, which acts as the Proton donor. Zn(2+)-binding residues include cysteine 92 and cysteine 95.

The protein belongs to the cytidine and deoxycytidylate deaminase family. Homodimer. Interacts with A1CF; form an mRNA editing complex. Interacts with RBM47; form an mRNA editing complex. Found in a complex with CELF2/CUGBP2 and A1CF. Interacts with HNRPAB. Interacts with SYNCRIP. It depends on Zn(2+) as a cofactor.

Its subcellular location is the cytoplasm. It is found in the nucleus. It catalyses the reaction a cytidine in mRNA + H2O + H(+) = a uridine in mRNA + NH4(+). The catalysed reaction is cytidine(6666) in apoB mRNA + H2O + H(+) = uridine(6666) in apoB mRNA + NH4(+). In terms of biological role, cytidine deaminase catalyzing the cytidine to uridine postranscriptional editing of a variety of mRNAs. Form complexes with cofactors that confer differential editing activity and selectivity. Responsible for the postranscriptional editing of a CAA codon for Gln to a UAA codon for stop in the apolipoprotein B mRNA. Also involved in CGA (Arg) to UGA (Stop) editing in the NF1 mRNA. May also play a role in the epigenetic regulation of gene expression by participating in DNA demethylation. The sequence is that of C-&gt;U-editing enzyme APOBEC-1 from Monodelphis domestica (Gray short-tailed opossum).